The following is a 2013-amino-acid chain: Cell adhesion molecule DSCAM (2013 aa).

An N-terminal signal peptide occupies residues 1 to 17 (MWILALSLFQSFANVFS). Over 18–1594 (EEPHSSLYFV…EGLTTNEGLK (1577 aa)) the chain is Extracellular. 9 consecutive Ig-like C2-type domains span residues 20-119 (PHSS…VHIK), 125-216 (PYTV…ARLF), 225-305 (PSIL…AKVI), 313-401 (PLKA…VQVV), 407-500 (PKII…ARIN), 504-592 (PASI…VHVT), 596-685 (PPFI…SQLI), 690-783 (PKFV…MYLT), and 787-883 (PAMI…LTVQ). Intrachain disulfides connect cysteine 46–cysteine 102, cysteine 145–cysteine 197, cysteine 246–cysteine 293, cysteine 335–cysteine 385, cysteine 428–cysteine 484, cysteine 525–cysteine 575, cysteine 617–cysteine 669, cysteine 711–cysteine 766, and cysteine 809–cysteine 865. Asparagine 78 is a glycosylation site (N-linked (GlcNAc...) asparagine). N-linked (GlcNAc...) asparagine glycosylation is present at asparagine 470. N-linked (GlcNAc...) asparagine glycosylation occurs at asparagine 666. Fibronectin type-III domains are found at residues 885 to 982 (PPDP…ADEA), 987 to 1086 (PPQE…TLED), 1091 to 1187 (PPEN…TKED), and 1191 to 1285 (PPAG…AKAP). N-linked (GlcNAc...) asparagine glycosylation is found at asparagine 1160 and asparagine 1250. In terms of domain architecture, Ig-like C2-type 10 spans 1285 to 1377 (PARILTFSGT…DEIILNLQVQ (93 aa)). The cysteines at positions 1307 and 1359 are disulfide-linked. 2 consecutive Fibronectin type-III domains span residues 1379-1473 (PPDQ…TLGK) and 1474-1575 (EPQF…TIPP). The helical transmembrane segment at 1595-1615 (ILVTISCILVGVLLLFVLLLV) threads the bilayer. The Cytoplasmic segment spans residues 1616–2013 (VRRRRREQRL…NPYAKSYTLV (398 aa)). The tract at residues 1616 to 2013 (VRRRRREQRL…NPYAKSYTLV (398 aa)) is required for netrin-mediated axon repulsion of neuronal growth cones. 2 disordered regions span residues 1718 to 1809 (LVDV…SASS) and 1920 to 2013 (RDLS…YTLV). The segment covering 1799–1809 (SSMVSTESASS) has biased composition (low complexity). Positions 1949-1968 (EASSSTSSTREGQQSWQQGA) are enriched in polar residues.

As to quaternary structure, homodimer; mediates homophilic interactions to promote cell adhesion. Interacts with DCC; the interaction is abolished in response to NTN1. Interacts (via extracellular domain) with NTN1. Interacts (via extracellular domain) with UNC5C (via Ig-like C2-type domain). Interacts with PTK2. Interacts with FYN. In terms of processing, phosphorylated at tyrosine residues. Phosphorylation is enhanced by NTN1. In terms of tissue distribution, expressed in cortical and cerebellar neurons, in cells of the external and internal granular layer and of the Purkinje cell layer (at protein level). In the retina, expressed in dopaminergic and Nos1-positive amacrine cells and most retinal ganglion cells (at protein level). Expressed in the brain with highest levels in the cortex, olfactory bulb, hippocampus, thalamus, cerebellum and spinal cord. Expressed in the retinal ganglion layer (RGL).

It is found in the cell membrane. The protein localises to the cell projection. Its subcellular location is the axon. The protein resides in the synapse. It localises to the dendrite. It is found in the growth cone. Functionally, cell adhesion molecule that plays a role in neuronal self-avoidance. Promotes repulsion between specific neuronal processes of either the same cell or the same subtype of cells. Mediates within retinal amacrine and ganglion cell subtypes both isoneuronal self-avoidance for creating an orderly dendritic arborization and heteroneuronal self-avoidance to maintain the mosaic spacing between amacrine and ganglion cell bodies. Receptor for netrin required for axon guidance independently of and in collaboration with the receptor DCC. Might also collaborate with UNC5C in NTN1-mediated axon repulsion independently of DCC. In spinal cord development plays a role in guiding commissural axons projection and pathfinding across the ventral midline to reach the floor plate upon ligand binding. Mediates intracellular signaling by stimulating the activation of MAPK8 and MAP kinase p38. Adhesion molecule that promotes lamina-specific synaptic connections in the retina: expressed in specific subsets of interneurons and retinal ganglion cells (RGCs) and promotes synaptic connectivity via homophilic interactions. In Mus musculus (Mouse), this protein is Cell adhesion molecule DSCAM (Dscam).